A 105-amino-acid chain; its full sequence is Large ribosomal subunit protein uL23 (105 aa).

The protein belongs to the universal ribosomal protein uL23 family. As to quaternary structure, part of the 50S ribosomal subunit. Contacts protein L29, and trigger factor when it is bound to the ribosome.

Functionally, one of the early assembly proteins it binds 23S rRNA. One of the proteins that surrounds the polypeptide exit tunnel on the outside of the ribosome. Forms the main docking site for trigger factor binding to the ribosome. The sequence is that of Large ribosomal subunit protein uL23 from Chloroherpeton thalassium (strain ATCC 35110 / GB-78).